We begin with the raw amino-acid sequence, 296 residues long: Short-chain dehydrogenase/reductase ascJ (296 aa).

3 residues coordinate NADP(+): Ile28, Asp66, and Asn93. Ser155 functions as the Proton donor in the catalytic mechanism. Tyr168, Lys172, and Thr205 together coordinate NADP(+). Tyr168 functions as the Proton acceptor in the catalytic mechanism. Lys172 functions as the Lowers pKa of active site Tyr in the catalytic mechanism.

It belongs to the short-chain dehydrogenases/reductases (SDR) family.

It carries out the reaction ascofuranol + A = ascofuranone + AH2. It functions in the pathway secondary metabolite biosynthesis; terpenoid biosynthesis. In terms of biological role, short-chain dehydrogenase/reductase; part of the asc-2 gene cluster that mediates the biosynthesis of ascofuranone, a strong inhibitor of cyanide-insensitive alternative oxidases and a promising drug candidate against African trypanosomiasis. The first step in the pathway is performed by the non-reducing polyketide synthase ascC that produces orsellinic acid by condensing acetyl-CoA with 3 malonyl-CoA units. Orsellinic acid is then prenylated by the prenyltransferase ascA to yield ilicicolinic acid B. Ilicicolinic acid B is further reduced to ilicicolin B by the reductase ascB. The halogenase ascD then chlorinates ilicicolin B to produce ilicicolin A which is converted to ilicicolin A epoxide by the cytochrome P450 monooxygenase ascE that catalyzes stereoselective epoxidation of the terminal double bond of the prenyl group. Ilicicolin A epoxide is the last common precursor for the biosynthesis of ascofuranone and ascochlorin. The terpene cyclase ascF produces a monocyclic terpene, and the cyclization reaction is proposed to be initiated by protonation of the terminal epoxide of ilicicolin A epoxide to generate a monocyclic tertiarycation, which is followed by a series of hydride and methyl shifts with abstraction of proton, leading to the formation of the (14S,15R,19R)-trimethylcyclohexanone ring structure of ilicicolin C, which is finally reduced to ascochlorin by the dehydrogenase ascG. On the other hand, ilicicolin A epoxide is hydroxylated by the cytochrome P450 monooxygenase ascH, and the resultant product is cyclized by the terpene cyclase ascI to ascofuranol via protonation-initiated epoxide ring opening, which facilitates the 6-endo-tet cyclization to form the tetrahy-drofuran ring. Finally, ascofuranol is oxidized into ascofuranone by ascJ. The polypeptide is Short-chain dehydrogenase/reductase ascJ (Acremonium egyptiacum (Oospora egyptiaca)).